The primary structure comprises 214 residues: Peptidyl-tRNA hydrolase (214 aa).

Position 14 (Y14) interacts with tRNA. H19 functions as the Proton acceptor in the catalytic mechanism. Residues Y64, N66, and N113 each coordinate tRNA. Positions 184 to 214 (RINAPPPKPEKKRGSETSDPSAESADHAGGG) are disordered.

This sequence belongs to the PTH family. As to quaternary structure, monomer.

It localises to the cytoplasm. The catalysed reaction is an N-acyl-L-alpha-aminoacyl-tRNA + H2O = an N-acyl-L-amino acid + a tRNA + H(+). In terms of biological role, hydrolyzes ribosome-free peptidyl-tRNAs (with 1 or more amino acids incorporated), which drop off the ribosome during protein synthesis, or as a result of ribosome stalling. Catalyzes the release of premature peptidyl moieties from peptidyl-tRNA molecules trapped in stalled 50S ribosomal subunits, and thus maintains levels of free tRNAs and 50S ribosomes. The chain is Peptidyl-tRNA hydrolase from Roseiflexus castenholzii (strain DSM 13941 / HLO8).